The following is a 126-amino-acid chain: Protein ApaG (126 aa).

In terms of domain architecture, ApaG spans 2 to 126; it reads SDPRYQVDVS…FRLAVPGALH (125 aa).

In Pseudomonas fluorescens (strain Pf0-1), this protein is Protein ApaG.